The following is a 249-amino-acid chain: 23S rRNA (guanosine-2'-O-)-methyltransferase RlmB (249 aa).

S-adenosyl-L-methionine is bound by residues Gly-200, Ile-220, and Leu-229.

The protein belongs to the class IV-like SAM-binding methyltransferase superfamily. RNA methyltransferase TrmH family. RlmB subfamily.

The protein localises to the cytoplasm. The catalysed reaction is guanosine(2251) in 23S rRNA + S-adenosyl-L-methionine = 2'-O-methylguanosine(2251) in 23S rRNA + S-adenosyl-L-homocysteine + H(+). Its function is as follows. Specifically methylates the ribose of guanosine 2251 in 23S rRNA. The polypeptide is 23S rRNA (guanosine-2'-O-)-methyltransferase RlmB (Xanthomonas axonopodis pv. citri (strain 306)).